Reading from the N-terminus, the 298-residue chain is Small ribosomal subunit protein uS2 (298 aa).

2 stretches are compositionally biased toward basic and acidic residues: residues 237–259 (QSKE…DGQK) and 280–298 (PKSE…ENKG). Positions 237–298 (QSKELDDKAD…DAAKLPENKG (62 aa)) are disordered.

The protein belongs to the universal ribosomal protein uS2 family.

This is Small ribosomal subunit protein uS2 from Neorickettsia sennetsu (strain ATCC VR-367 / Miyayama) (Ehrlichia sennetsu).